The primary structure comprises 152 residues: UPF0266 membrane protein YobD (152 aa).

The next 3 helical transmembrane spans lie at 6 to 26 (LVLILFIAALLAFAIYDQFIM), 45 to 65 (IDSVIFVGLIVILIYNNVTNH), and 67 to 87 (ALITTWLLSALALMGFYIFWI).

This sequence belongs to the UPF0266 family.

It localises to the cell inner membrane. The protein is UPF0266 membrane protein YobD of Shigella dysenteriae serotype 1 (strain Sd197).